We begin with the raw amino-acid sequence, 344 residues long: N-acetyl-gamma-glutamyl-phosphate reductase (344 aa).

Cys-149 is a catalytic residue.

This sequence belongs to the NAGSA dehydrogenase family. Type 1 subfamily.

Its subcellular location is the cytoplasm. The catalysed reaction is N-acetyl-L-glutamate 5-semialdehyde + phosphate + NADP(+) = N-acetyl-L-glutamyl 5-phosphate + NADPH + H(+). The protein operates within amino-acid biosynthesis; L-arginine biosynthesis; N(2)-acetyl-L-ornithine from L-glutamate: step 3/4. Catalyzes the NADPH-dependent reduction of N-acetyl-5-glutamyl phosphate to yield N-acetyl-L-glutamate 5-semialdehyde. This is N-acetyl-gamma-glutamyl-phosphate reductase from Syntrophobacter fumaroxidans (strain DSM 10017 / MPOB).